The chain runs to 288 residues: 2-hydroxy-6-oxononadienedioate/2-hydroxy-6-oxononatrienedioate hydrolase (288 aa).

Catalysis depends on His-267, which acts as the Proton acceptor.

This sequence belongs to the AB hydrolase superfamily. MhpC family. As to quaternary structure, homodimer.

The catalysed reaction is (2Z,4E)-2-hydroxy-6-oxonona-2,4-dienedioate + H2O = (2Z)-2-hydroxypenta-2,4-dienoate + succinate + H(+). The enzyme catalyses (2Z,4E,7E)-2-hydroxy-6-oxonona-2,4,7-trienedioate + H2O = (2Z)-2-hydroxypenta-2,4-dienoate + fumarate + H(+). The protein operates within aromatic compound metabolism; 3-phenylpropanoate degradation. Functionally, catalyzes the cleavage of the C5-C6 bond of 2-hydroxy-6-oxononadienedioate and 2-hydroxy-6-oxononatrienedioate, a dienol ring fission product of the bacterial meta-cleavage pathway for degradation of phenylpropionic acid. The polypeptide is 2-hydroxy-6-oxononadienedioate/2-hydroxy-6-oxononatrienedioate hydrolase (Escherichia coli O81 (strain ED1a)).